The sequence spans 68 residues: Tau-scoloptoxin(04)-Ssm1b (68 aa).

Positions Met1 to Gly25 are cleaved as a signal peptide. Positions Glu26–Arg36 are excised as a propeptide. 2 disulfide bridges follow: Cys45/Cys56 and Cys50/Cys63. The interval Arg55–Glu67 is highly charged C-terminal region, binds to TRPV1 channel.

This sequence belongs to the scoloptoxin-04 family. In terms of tissue distribution, expressed by the venom gland.

Its subcellular location is the secreted. Extremely potent agonist and potentiator of TRPV1 (EC(50)=470-521.5 nM (mouse)). It strongly promotes the heat activation process by downshifting the activation threshold temperature. It preferably binds to the activated channel and promotes its opening. Holding the channel closed by cooling prevents binding of this toxin, leaving it ineffective. The toxin binds to the charge-rich outer pore region of the channel where it directly interacts with the pore helix and turret, two adjacent structural elements known to be critical for activation gating of TRPV1. In comparison with Sm1b, induces a TRPV1 desensitization with slower kinetics (20 seconds). In vivo, induces pain in mice after intraplantar injection. In terms of biological role, potent agonist and probable potentiator of TRPV1 (EC(50)=38.35 uM (mouse)). Also binds to the outer pore region of TRPV1. In comparison with Sm1a, induces a TRPV1 desensitization with faster kinetics (2 seconds) and leads to a more complete TRPV1 desensitization. Desensitization is achieved by reducing both the open probability and the single-channel conductance upon prolonged exposure. The polypeptide is Tau-scoloptoxin(04)-Ssm1b (Scolopendra mutilans (Chinese red-headed centipede)).